The chain runs to 370 residues: Cysteine-type anaerobic sulfatase-maturating enzyme (370 aa).

A Radical SAM core domain is found at 1 to 227 (MPPLSLLIKP…LKNLFDFWYE (227 aa)). Cys-15 and Cys-19 together coordinate [4Fe-4S] cluster. Position 21 (Tyr-21) interacts with S-adenosyl-L-methionine. Residue Cys-22 coordinates [4Fe-4S] cluster. S-adenosyl-L-methionine is bound by residues Gly-66, Ser-122, Arg-134, and Leu-195. The [4Fe-4S] cluster site is built by Cys-255, Cys-261, and Cys-276. Catalysis depends on Asp-277, which acts as the Proton acceptor. Residues Cys-317, Cys-320, Cys-326, Cys-330, and Cys-348 each coordinate [4Fe-4S] cluster.

It belongs to the radical SAM superfamily. Anaerobic sulfatase-maturating enzyme family. In terms of assembly, monomer. It depends on [4Fe-4S] cluster as a cofactor.

It carries out the reaction L-cysteinyl-[sulfatase] + S-adenosyl-L-methionine + H2O = 3-oxo-L-alanyl-[sulfatase] + hydrogen sulfide + 5'-deoxyadenosine + L-methionine + 2 H(+). The protein operates within protein modification; sulfatase oxidation. Its function is as follows. Involved in 'Cys-type' sulfatase maturation under anaerobic conditions. Catalyzes the post-translational modification of cysteine ('Cys-51' in the arylsulfatase CPF_0221) into 3-oxoalanine (also known as C(alpha)-formylglycine (FGly)), by a free radical chemical mechanism initiated via the reductive cleavage of S-adenosyl-L-methionine (SAM). Is also able to oxidize a serine residue in a synthetic substrate to FGly in vitro, and in a serine variant of a Cys-type sulfatase in vivo, but this activity is not physiological. Converts threonyl peptides to the corresponding ketone product, and also allo-threonyl peptides, but with a significantly reduced efficiency. In Clostridium perfringens (strain ATCC 13124 / DSM 756 / JCM 1290 / NCIMB 6125 / NCTC 8237 / Type A), this protein is Cysteine-type anaerobic sulfatase-maturating enzyme.